A 311-amino-acid polypeptide reads, in one-letter code: Pyrimidine-specific ribonucleoside hydrolase RihA (311 aa).

His240 is an active-site residue.

It belongs to the IUNH family. RihA subfamily.

Functionally, hydrolyzes cytidine or uridine to ribose and cytosine or uracil, respectively. The chain is Pyrimidine-specific ribonucleoside hydrolase RihA from Shigella flexneri serotype 5b (strain 8401).